Consider the following 305-residue polypeptide: Type II restriction enzyme SsoII (305 aa).

It catalyses the reaction Endonucleolytic cleavage of DNA to give specific double-stranded fragments with terminal 5'-phosphates.. A P subtype restriction enzyme that recognizes the double-stranded sequence 5'-CCNGG-3' and cleaves before C-1. The chain is Type II restriction enzyme SsoII (ssoIIR) from Shigella sonnei.